Reading from the N-terminus, the 534-residue chain is uncharacterized protein (534 aa).

This is an uncharacterized protein from Escherichia coli (strain K12).